The sequence spans 227 residues: Isopentenyl-diphosphate delta-isomerase 2 (227 aa).

Residue lysine 36 participates in substrate binding. The Mg(2+) site is built by histidine 40 and histidine 51. Residues 49-199 (LLHRAFSVVL…EVKVTPWLRT (151 aa)) form the Nudix hydrolase domain. Substrate contacts are provided by arginine 70 and lysine 74. Serine 86 is an active-site residue. A substrate-binding site is contributed by serine 87. Residues glutamate 146 and glutamate 148 each contribute to the Mg(2+) site. Residue glutamate 148 is part of the active site. Positions 225–227 (HRV) match the Microbody targeting signal motif.

Belongs to the IPP isomerase type 1 family. The cofactor is Mg(2+). Muscle-specific expression.

The protein resides in the peroxisome. The enzyme catalyses isopentenyl diphosphate = dimethylallyl diphosphate. It functions in the pathway isoprenoid biosynthesis; dimethylallyl diphosphate biosynthesis; dimethylallyl diphosphate from isopentenyl diphosphate: step 1/1. Its function is as follows. Catalyzes the 1,3-allylic rearrangement of the homoallylic substrate isopentenyl (IPP) to its highly electrophilic allylic isomer, dimethylallyl diphosphate (DMAPP). The protein is Isopentenyl-diphosphate delta-isomerase 2 (IDI2) of Homo sapiens (Human).